We begin with the raw amino-acid sequence, 170 residues long: Arginine repressor (170 aa).

The protein belongs to the ArgR family.

The protein localises to the cytoplasm. It functions in the pathway amino-acid biosynthesis; L-arginine biosynthesis [regulation]. Functionally, regulates arginine biosynthesis genes. The sequence is that of Arginine repressor from Mycobacterium tuberculosis (strain ATCC 25177 / H37Ra).